A 117-amino-acid polypeptide reads, in one-letter code: MLKFKNMYITSHDNFIAYIFFTFFTFIPFYRSDQSTLCRCSQKIFLSGQRLLRQTVIIVGPLAPFSSYSSPFFFIPLFFSGPNSIPFQDYRCSPWCPSRSHGAVLPSYCSLRWSHRT.

A run of 2 helical transmembrane segments spans residues 9–29 and 56–76; these read ITSH…FIPF and VIIV…FFIP.

It localises to the membrane. This is an uncharacterized protein from Saccharomyces cerevisiae (strain ATCC 204508 / S288c) (Baker's yeast).